A 105-amino-acid polypeptide reads, in one-letter code: Small ribosomal subunit protein uS10 (105 aa).

The protein belongs to the universal ribosomal protein uS10 family. Part of the 30S ribosomal subunit.

Functionally, involved in the binding of tRNA to the ribosomes. This Acidobacterium capsulatum (strain ATCC 51196 / DSM 11244 / BCRC 80197 / JCM 7670 / NBRC 15755 / NCIMB 13165 / 161) protein is Small ribosomal subunit protein uS10.